We begin with the raw amino-acid sequence, 99 residues long: Plastocyanin (99 aa).

Residues 1–99 (VEVLMGGSGG…IGMSGIVTVN (99 aa)) enclose the Plastocyanin-like domain. Cu cation-binding residues include His37, Cys84, His87, and Met92.

The protein belongs to the plastocyanin family. It depends on Cu(2+) as a cofactor.

It is found in the plastid. It localises to the chloroplast thylakoid membrane. Participates in electron transfer between P700 and the cytochrome b6-f complex in photosystem I. In Ginkgo biloba (Ginkgo), this protein is Plastocyanin (PETE).